Reading from the N-terminus, the 601-residue chain is Tripeptidyl-peptidase SED4 (601 aa).

Residues methionine 1–alanine 22 form the signal peptide. The propeptide at alanine 23–threonine 202 is removed in mature form. Asparagine 210 and asparagine 281 each carry an N-linked (GlcNAc...) asparagine glycan. The Peptidase S53 domain occupies threonine 212–tyrosine 601. Active-site charge relay system residues include glutamate 288 and aspartate 292. Asparagine 323 carries N-linked (GlcNAc...) asparagine glycosylation. The Charge relay system role is filled by serine 504. Residues aspartate 546 and isoleucine 547 each contribute to the Ca(2+) site. Asparagine 575 carries N-linked (GlcNAc...) asparagine glycosylation. Positions 579 and 581 each coordinate Ca(2+).

Requires Ca(2+) as cofactor.

The protein resides in the secreted. The protein localises to the extracellular space. It carries out the reaction Release of an N-terminal tripeptide from a polypeptide.. Secreted tripeptidyl-peptidase which degrades proteins at acidic pHs and is involved in virulence. This chain is Tripeptidyl-peptidase SED4 (SED4), found in Arthroderma otae (strain ATCC MYA-4605 / CBS 113480) (Microsporum canis).